Reading from the N-terminus, the 142-residue chain is MAKKVTGYLKLQVPAGAANPSPPIGPALGQRGLNIMEFCKAFNAQTQKEEKNTPIPVVITIYADRSFTFEMKTPPMSFFLKQAAKIQSGSKAPGRDKAGKVTKAQVREIAEKKMKDLNCDSIESAMKMVEGSARSMGLEVAG.

The protein belongs to the universal ribosomal protein uL11 family. In terms of assembly, part of the ribosomal stalk of the 50S ribosomal subunit. Interacts with L10 and the large rRNA to form the base of the stalk. L10 forms an elongated spine to which L12 dimers bind in a sequential fashion forming a multimeric L10(L12)X complex. One or more lysine residues are methylated.

Forms part of the ribosomal stalk which helps the ribosome interact with GTP-bound translation factors. This is Large ribosomal subunit protein uL11 from Bradyrhizobium sp. (strain ORS 278).